The sequence spans 338 residues: Taste receptor type 2 member 39 (338 aa).

At 1-30 (MLGRCFPPNTKEKQQLRMIKLCDPAESELS) the chain is on the extracellular side. Residues 31 to 51 (PFLITLTLAVLLAEYLTGIIA) traverse the membrane as a helical segment. The Cytoplasmic segment spans residues 52 to 74 (NGFITAIHAAEWVQNKSVSTSGR). The helical transmembrane segment at 75-95 (ILVFLSVSRIALQSLMMLEIT) threads the bilayer. The Extracellular portion of the chain corresponds to 96 to 116 (ISSTSLSFYSEDAVYYAFKIS). A helical transmembrane segment spans residues 117–137 (FIFLNFCSLWFAAWLSFFYFV). Topologically, residues 138-156 (KIANFSYPLFLKLRWRISG) are cytoplasmic. Residues 157–177 (LIPWLLWLSVFISFSHSMFCI) form a helical membrane-spanning segment. Residues 178–205 (NICTGYCDNSFPIHSSNSTEKTYFSEIS) are Extracellular-facing. A glycan (N-linked (GlcNAc...) asparagine) is linked at N194. A helical transmembrane segment spans residues 206 to 226 (VVSLAFFFNLGIVIPLIMFIL). Residues 227 to 262 (AAILLILSLKRHTLHMGSNATGSKDPSMEAHIGAIK) lie on the Cytoplasmic side of the membrane. The chain crosses the membrane as a helical span at residues 263–283 (ATSYFLILYIFNAVALFIYLS). The Extracellular segment spans residues 284 to 291 (NMFDINSL). Residues 292–312 (WNTLCQIIMAAYPASHSILLI) traverse the membrane as a helical segment. At 313 to 338 (KDNPGLRRAWKQLQHRLHLYPKQWTL) the chain is on the cytoplasmic side.

The protein belongs to the G-protein coupled receptor T2R family.

Its subcellular location is the membrane. In terms of biological role, receptor that may play a role in the perception of bitterness and is gustducin-linked. May play a role in sensing the chemical composition of the gastrointestinal content. The activity of this receptor may stimulate alpha gustducin, mediate PLC-beta-2 activation and lead to the gating of TRPM5. The sequence is that of Taste receptor type 2 member 39 (TAS2R39) from Macaca mulatta (Rhesus macaque).